The following is a 560-amino-acid chain: DNA ligase B (560 aa).

K124 functions as the N6-AMP-lysine intermediate in the catalytic mechanism.

This sequence belongs to the NAD-dependent DNA ligase family. LigB subfamily.

It carries out the reaction NAD(+) + (deoxyribonucleotide)n-3'-hydroxyl + 5'-phospho-(deoxyribonucleotide)m = (deoxyribonucleotide)n+m + AMP + beta-nicotinamide D-nucleotide.. Functionally, catalyzes the formation of phosphodiester linkages between 5'-phosphoryl and 3'-hydroxyl groups in double-stranded DNA using NAD as a coenzyme and as the energy source for the reaction. In Shigella flexneri serotype 5b (strain 8401), this protein is DNA ligase B.